The primary structure comprises 521 residues: Cholesterol side-chain cleavage enzyme, mitochondrial (521 aa).

The N-terminal 39 residues, 1-39 (MLAKGLPPRSVLVKGCQTFLSAPREGLGRLRVPTGEGAG), are a transit peptide targeting the mitochondrion. Position 462 (cysteine 462) interacts with heme.

Belongs to the cytochrome P450 family. In terms of assembly, interacts with FDX1/adrenodoxin. Heme serves as cofactor.

It is found in the mitochondrion inner membrane. The catalysed reaction is 6 reduced [adrenodoxin] + cholesterol + 3 O2 + 6 H(+) = 4-methylpentanal + pregnenolone + 6 oxidized [adrenodoxin] + 4 H2O. The enzyme catalyses 2 reduced [adrenodoxin] + cholesterol + O2 + 2 H(+) = (22R)-hydroxycholesterol + 2 oxidized [adrenodoxin] + H2O. It catalyses the reaction (22R)-hydroxycholesterol + 2 reduced [adrenodoxin] + O2 + 2 H(+) = (20R,22R)-20,22-dihydroxycholesterol + 2 oxidized [adrenodoxin] + H2O. It carries out the reaction (20R,22R)-20,22-dihydroxycholesterol + 2 reduced [adrenodoxin] + O2 + 2 H(+) = 4-methylpentanal + pregnenolone + 2 oxidized [adrenodoxin] + 2 H2O. It participates in lipid metabolism; C21-steroid hormone metabolism. It functions in the pathway steroid metabolism; cholesterol metabolism. A cytochrome P450 monooxygenase that catalyzes the side-chain hydroxylation and cleavage of cholesterol to pregnenolone, the precursor of most steroid hormones. Catalyzes three sequential oxidation reactions of cholesterol, namely the hydroxylation at C22 followed with the hydroxylation at C20 to yield 20R,22R-hydroxycholesterol that is further cleaved between C20 and C22 to yield the C21-steroid pregnenolone and 4-methylpentanal. Mechanistically, uses molecular oxygen inserting one oxygen atom into a substrate and reducing the second into a water molecule. Two electrons are provided by NADPH via a two-protein mitochondrial transfer system comprising flavoprotein FDXR (adrenodoxin/ferredoxin reductase) and nonheme iron-sulfur protein FDX1 or FDX2 (adrenodoxin/ferredoxin). The protein is Cholesterol side-chain cleavage enzyme, mitochondrial of Homo sapiens (Human).